The following is a 208-amino-acid chain: Ion-translocating oxidoreductase complex subunit G (208 aa).

Residues 9 to 29 form a helical membrane-spanning segment; the sequence is GVTLAVFAALTTGLTAMVNAL. Thr-174 bears the FMN phosphoryl threonine mark.

The protein belongs to the RnfG family. The complex is composed of six subunits: RnfA, RnfB, RnfC, RnfD, RnfE and RnfG. FMN serves as cofactor.

It is found in the cell inner membrane. Functionally, part of a membrane-bound complex that couples electron transfer with translocation of ions across the membrane. This is Ion-translocating oxidoreductase complex subunit G from Cronobacter sakazakii (strain ATCC BAA-894) (Enterobacter sakazakii).